The following is a 441-amino-acid chain: Arginine biosynthesis bifunctional protein ArgJ, mitochondrial (441 aa).

6 residues coordinate substrate: Thr-177, Lys-204, Thr-215, Glu-301, Asn-436, and Ser-441. The Nucleophile role is filled by Thr-215.

It belongs to the ArgJ family. Heterodimer of an alpha and a beta chain. The alpha and beta chains are autoproteolytically processed from a single precursor protein within the mitochondrion.

Its subcellular location is the mitochondrion matrix. The catalysed reaction is N(2)-acetyl-L-ornithine + L-glutamate = N-acetyl-L-glutamate + L-ornithine. It catalyses the reaction L-glutamate + acetyl-CoA = N-acetyl-L-glutamate + CoA + H(+). It functions in the pathway amino-acid biosynthesis; L-arginine biosynthesis; L-ornithine and N-acetyl-L-glutamate from L-glutamate and N(2)-acetyl-L-ornithine (cyclic): step 1/1. The protein operates within amino-acid biosynthesis; L-arginine biosynthesis; N(2)-acetyl-L-ornithine from L-glutamate: step 1/4. In terms of biological role, catalyzes two activities which are involved in the cyclic version of arginine biosynthesis: the synthesis of acetylglutamate from glutamate and acetyl-CoA, and of ornithine by transacetylation between acetylornithine and glutamate. The polypeptide is Arginine biosynthesis bifunctional protein ArgJ, mitochondrial (Kluyveromyces lactis (strain ATCC 8585 / CBS 2359 / DSM 70799 / NBRC 1267 / NRRL Y-1140 / WM37) (Yeast)).